The sequence spans 452 residues: tRNA modification GTPase MnmE (452 aa).

Positions 22, 80, and 119 each coordinate (6S)-5-formyl-5,6,7,8-tetrahydrofolate. In terms of domain architecture, TrmE-type G spans 213–375; the sequence is GVRTVIVGKP…LENKIYEKFF (163 aa). Asn-223 is a binding site for K(+). GTP-binding positions include 223–228, 242–248, and 267–270; these read NSGKST, TDIPGTT, and DTAG. Ser-227 provides a ligand contact to Mg(2+). K(+)-binding residues include Thr-242, Ile-244, and Thr-247. A Mg(2+)-binding site is contributed by Thr-248. A (6S)-5-formyl-5,6,7,8-tetrahydrofolate-binding site is contributed by Lys-452.

Belongs to the TRAFAC class TrmE-Era-EngA-EngB-Septin-like GTPase superfamily. TrmE GTPase family. In terms of assembly, homodimer. Heterotetramer of two MnmE and two MnmG subunits. Requires K(+) as cofactor.

It is found in the cytoplasm. In terms of biological role, exhibits a very high intrinsic GTPase hydrolysis rate. Involved in the addition of a carboxymethylaminomethyl (cmnm) group at the wobble position (U34) of certain tRNAs, forming tRNA-cmnm(5)s(2)U34. The sequence is that of tRNA modification GTPase MnmE from Petrotoga mobilis (strain DSM 10674 / SJ95).